Consider the following 418-residue polypeptide: MFRRLLIATVVGILAAFAVAGFRHAMLLLEWLFLNNDSGSLVNAATNLSPWRRLLTPALGGLAAGLLLMGWQKFTQQRPHAPTDYMEALQTDGQFDYAASLVKSLASLLVVTSGSAIGREGAMILLAALAASCFAQRFTPRQEWKLWIACGAAAGMAAAYRAPLAGSLFIAEVLFGTMMLASLGPVIISAVVALLVSNLINHSDALLYSVQLSVTVQARDYALIISTGVLAGLCGPLLLTLMNACHRGFVSLKLAPPWQLALGGLIVGLLSLFTPAVWGNGYSTVQSFLTAPPLLMIIAGIFLCKLCAVLASSGSGAPGGVFTPTLFIGLAIGMLYGRSLGLWFPDGEEITLLLGLTGMATLLAATTHAPIMSTLMICEMTGEYQLLPGLLIACVIASVISRTLHRDSIYRQHTAQHS.

At 1-4 the chain is on the cytoplasmic side; sequence MFRR. A helical transmembrane segment spans residues 5–25; that stretch reads LLIATVVGILAAFAVAGFRHA. Residues 26-53 lie on the Periplasmic side of the membrane; sequence MLLLEWLFLNNDSGSLVNAATNLSPWRR. A helical membrane pass occupies residues 54–74; that stretch reads LLTPALGGLAAGLLLMGWQKF. At 75–145 the chain is on the cytoplasmic side; sequence TQQRPHAPTD…QRFTPRQEWK (71 aa). Residues 146-166 form a helical membrane-spanning segment; it reads LWIACGAAAGMAAAYRAPLAG. Over 167–177 the chain is Periplasmic; that stretch reads SLFIAEVLFGT. Residues 178 to 200 form a helical membrane-spanning segment; the sequence is MMLASLGPVIISAVVALLVSNLI. Residues 201 to 221 are Cytoplasmic-facing; sequence NHSDALLYSVQLSVTVQARDY. The chain crosses the membrane as a helical span at residues 222 to 242; the sequence is ALIISTGVLAGLCGPLLLTLM. The Periplasmic portion of the chain corresponds to 243–257; that stretch reads NACHRGFVSLKLAPP. The chain crosses the membrane as a helical span at residues 258–278; the sequence is WQLALGGLIVGLLSLFTPAVW. Topologically, residues 279 to 290 are cytoplasmic; that stretch reads GNGYSTVQSFLT. A helical membrane pass occupies residues 291 to 311; it reads APPLLMIIAGIFLCKLCAVLA. The Periplasmic portion of the chain corresponds to 312–315; the sequence is SSGS. A helical membrane pass occupies residues 316-336; the sequence is GAPGGVFTPTLFIGLAIGMLY. Over 337-351 the chain is Cytoplasmic; the sequence is GRSLGLWFPDGEEIT. A helical membrane pass occupies residues 352–372; sequence LLLGLTGMATLLAATTHAPIM. Topologically, residues 373 to 379 are periplasmic; it reads STLMICE. Residues 380–400 form a helical membrane-spanning segment; it reads MTGEYQLLPGLLIACVIASVI. Residues 401-418 lie on the Cytoplasmic side of the membrane; sequence SRTLHRDSIYRQHTAQHS.

The protein belongs to the chloride channel (TC 2.A.49) family. ClcB subfamily.

Its subcellular location is the cell inner membrane. Probably acts as an electrical shunt for an outwardly-directed proton pump that is linked to amino acid decarboxylation, as part of the extreme acid resistance (XAR) response. This chain is Voltage-gated ClC-type chloride channel ClcB (clcB), found in Escherichia coli O157:H7.